Here is a 314-residue protein sequence, read N- to C-terminus: Olfactory receptor 1E2 (314 aa).

Topologically, residues 1–25 are extracellular; the sequence is MMGQNQTSISDFLLLGLPIQPEQQN. The N-linked (GlcNAc...) asparagine glycan is linked to N5. A helical transmembrane segment spans residues 26-49; that stretch reads LCYALFLAMYLTTLLGNLLIIVLI. Residues 50-57 lie on the Cytoplasmic side of the membrane; the sequence is RLDSHLHT. The helical transmembrane segment at 58 to 79 threads the bilayer; sequence PMYLFLSNLSFSDLCFSSVTIP. At 80–100 the chain is on the extracellular side; it reads KLLQNMQNQDPSIPYADCLTQ. C97 and C189 form a disulfide bridge. The chain crosses the membrane as a helical span at residues 101-120; sequence MYFFLLFGDLESFLLVAMAY. At 121 to 139 the chain is on the cytoplasmic side; the sequence is DRYVAICFPLHYTAIMSPM. The chain crosses the membrane as a helical span at residues 140 to 158; the sequence is LCLSLVALSWVLTTFHAML. Over 159-195 the chain is Extracellular; it reads HTLLMARLCFCADNVIPHFFCDMSALLKLACSDTRVN. A helical membrane pass occupies residues 196–219; it reads EWVIFIMGGLIVVIPFLLILGSYA. Over 220 to 236 the chain is Cytoplasmic; it reads RIVSSILKVPSSKGICK. A helical membrane pass occupies residues 237–259; it reads AFSTCGSHLSVVSLFYGTIIGLY. Residues 260–272 lie on the Extracellular side of the membrane; that stretch reads LCPSANSSTLKET. The N-linked (GlcNAc...) asparagine glycan is linked to N265. A helical membrane pass occupies residues 273–292; the sequence is VMAMMYTVVTPMLNPFIYSL. The Cytoplasmic segment spans residues 293–314; that stretch reads RNRDMKGALERVICKRKNPFLL.

The protein belongs to the G-protein coupled receptor 1 family.

It localises to the cell membrane. Its function is as follows. Odorant receptor. The polypeptide is Olfactory receptor 1E2 (OR1E2) (Gorilla gorilla gorilla (Western lowland gorilla)).